Here is a 224-residue protein sequence, read N- to C-terminus: 4'-phosphopantetheinyl transferase (224 aa).

Residues aspartate 107, glutamate 109, and glutamate 151 each coordinate Mg(2+). The peptidyl carrier protein binding stretch occupies residues glycine 158–cysteine 189.

It belongs to the P-Pant transferase superfamily. Gsp/Sfp/HetI/AcpT family. Mg(2+) is required as a cofactor.

It catalyses the reaction apo-[peptidyl-carrier protein] + CoA = holo-[peptidyl-carrier protein] + adenosine 3',5'-bisphosphate + H(+). Its function is as follows. May activate the peptidyl carrier protein (PCP) domains of surfactin synthetase SRF1/2/3 and iturin A synthetase, by transferring the 4'-phosphopantetheinyl moiety of coenzyme A (CoA) to a serine residue. Required for the coproduction of the lipopeptide antibiotics, iturin A and surfactin. This chain is 4'-phosphopantetheinyl transferase (lpa-14), found in Bacillus subtilis.